The sequence spans 189 residues: MAQIRQEALKKQKSETQKSTEGFVDIGNLAQWTCSSEKSGFPIRLVRDDNIDTYWQSDGSQPHTIHIKFVKRVSIKYVSMYLQYTLDESYTPSTLRISAGTGFQDLEIVTTVQVEEPTGWVHVPVGDFGRNGLLDVHLIQIKILANHQSGKDSHVRLIKIYAPEIEQPAIAVDEIPYTSLQFISRNQLR.

One can recognise a DOC domain in the interval 2 to 187 (AQIRQEALKK…TSLQFISRNQ (186 aa)).

It belongs to the APC10 family. In terms of assembly, the APC/C is composed of at least 13 subunits: apc1, apc2, nuc2, apc4, apc5, cut9, apc8, apc10, apc11, hcn1, apc13, apc14 and apc15. Interacts with nuc2.

In terms of biological role, component of the anaphase-promoting complex/cyclosome (APC/C), a cell cycle-regulated E3 ubiquitin-protein ligase complex that controls progression through mitosis and the G1 phase of the cell cycle. The APC/C is thought to confer substrate specificity and, in the presence of ubiquitin-conjugating E2 enzymes, it catalyzes the formation of protein-ubiquitin conjugates that are subsequently degraded by the 26S proteasome. Acts as a positive regulator of the anaphase promoting complex (APC)-cyclosome. Involved in G1 cell cycle arrest in response to nitrogen starvation. Required for ubiquitination and degradation of the mitotic B-type cyclin, cdc13. The chain is Anaphase-promoting complex subunit 10 (apc10) from Schizosaccharomyces pombe (strain 972 / ATCC 24843) (Fission yeast).